The following is a 461-amino-acid chain: MEREGIWHSTLGETWEPNNWLEGQQDSHLSQVGVTHKETFTEMRVCGGNEFERCSSQDSILDTQQSIPMVKRPHNCNSHGEDATQNSELIKTQRMFVGKKIYECNQCSKTFSQSSSLLKHQRIHTGEKPYKCNVCGKHFIERSSLTVHQRIHTGEKPYKCNECGKAFSQSMNLTVHQRTHTGEKPYQCKECGKAFHKNSSLIQHERIHTGEKPYKCNECGKAFTQSMNLTVHQRTHTGEKPYECNECGKAFSQSMHLIVHQRSHTGEKPYECSQCGKAFSKSSTLTLHQRNHTGEKPYKCNKCGKSFSQSTYLIEHQRLHSGVKPFECNECGKAFSKNSSLTQHRRIHTGEKPYECMVCGKHFTGRSSLTVHQVIHTGEKPYECNECGKAFSQSAYLIEHQRIHTGEKPYECDQCGKAFIKNSSLTVHQRTHTGEKPYQCNECGKAFSRSTNLTRHQRTHT.

13 consecutive C2H2-type zinc fingers follow at residues 102–124, 130–152, 158–180, 186–208, 214–236, 242–264, 270–292, 298–320, 326–348, 354–376, 382–404, 410–432, and 438–460; these read YECNQCSKTFSQSSSLLKHQRIH, YKCNVCGKHFIERSSLTVHQRIH, YKCNECGKAFSQSMNLTVHQRTH, YQCKECGKAFHKNSSLIQHERIH, YKCNECGKAFTQSMNLTVHQRTH, YECNECGKAFSQSMHLIVHQRSH, YECSQCGKAFSKSSTLTLHQRNH, YKCNKCGKSFSQSTYLIEHQRLH, FECNECGKAFSKNSSLTQHRRIH, YECMVCGKHFTGRSSLTVHQVIH, YECNECGKAFSQSAYLIEHQRIH, YECDQCGKAFIKNSSLTVHQRTH, and YQCNECGKAFSRSTNLTRHQRTH.

The protein belongs to the krueppel C2H2-type zinc-finger protein family.

The protein resides in the nucleus. Probable transcription factor involved in neuronal differentiation and/or phenotypic maintenance. This Homo sapiens (Human) protein is Zinc finger protein ZFP2 (ZFP2).